Consider the following 110-residue polypeptide: RNA polymerase II transcriptional coactivator (110 aa).

The disordered stretch occupies residues 1 to 50 (MPKTKKKDSSSDSDSGPDDRIKPASKKAKESDAPNSDPKDSGENGATSWT). Basic and acidic residues predominate over residues 17-42 (PDDRIKPASKKAKESDAPNSDPKDSG).

The protein belongs to the transcriptional coactivator PC4 family.

It localises to the nucleus. Functionally, general coactivator that functions cooperatively with TAFs and mediates functional interactions between upstream activators and the general transcriptional machinery. Binds single-stranded DNA. Binds specifically to the NssBF element, a short nucleotide sequence of the 1731 retrotransposon, to repress promoter activity. The protein is RNA polymerase II transcriptional coactivator (Ssb-c31a) of Drosophila melanogaster (Fruit fly).